The chain runs to 33 residues: uncharacterized protein (33 aa).

Residues 1–33 (MGSVIKKRRKRMSKKKHRKLLRRTRVQRRKLGK) form a disordered region.

This is an uncharacterized protein from Mycobacterium tuberculosis (strain CDC 1551 / Oshkosh).